We begin with the raw amino-acid sequence, 236 residues long: Large ribosomal subunit protein uL1 (236 aa).

The protein belongs to the universal ribosomal protein uL1 family. In terms of assembly, part of the 50S ribosomal subunit.

Its function is as follows. Binds directly to 23S rRNA. The L1 stalk is quite mobile in the ribosome, and is involved in E site tRNA release. Functionally, protein L1 is also a translational repressor protein, it controls the translation of the L11 operon by binding to its mRNA. The sequence is that of Large ribosomal subunit protein uL1 from Sorangium cellulosum (strain So ce56) (Polyangium cellulosum (strain So ce56)).